A 64-amino-acid polypeptide reads, in one-letter code: Kappa-lycotoxin-Os1a (64 aa).

Disulfide bonds link cysteine 10–cysteine 26, cysteine 17–cysteine 56, cysteine 19–cysteine 42, and cysteine 28–cysteine 40.

This sequence belongs to the neurotoxin 04 (omega-agtx) family. 01 (type I omega-agtx) subfamily. In terms of tissue distribution, expressed by the venom gland.

It is found in the secreted. Insecticidal to house crickets. It induces an excitatory slow-onset impact that leads to irreversible spastic paralysis. It also modifies human voltage-gated potassium channel Kv1.5/KCNA5. Most likely, it binds to the voltage-sensing domain of the channel, suggesting it does not block the pore but prevents its opening at physiological membrane potentials. The recombinant peptide binds to the channel in an irreversible manner and slows down the hKv1.5 current activation kinetics. It is not toxic to mice, when intracranially injected (at 0.5 ug/g mouse). The sequence is that of Kappa-lycotoxin-Os1a from Oculicosa supermirabilis (Central Asian wolf-spider).